The following is a 131-amino-acid chain: Guanyl-specific ribonuclease F1 (131 aa).

The N-terminal stretch at 1–25 (MLFFKSIASLAALVSLAVASPIESR) is a signal peptide. Pyrrolidone carboxylic acid is present on Gln26. 2 disulfides stabilise this stretch: Cys31-Cys127 and Cys49-Cys108. His65 is an active-site residue. Glu83 serves as the catalytic Proton acceptor. His116 serves as the catalytic Proton donor.

Belongs to the ribonuclease N1/T1 family.

The enzyme catalyses [RNA] containing guanosine + H2O = an [RNA fragment]-3'-guanosine-3'-phosphate + a 5'-hydroxy-ribonucleotide-3'-[RNA fragment].. This chain is Guanyl-specific ribonuclease F1, found in Fusarium fujikuroi (Bakanae and foot rot disease fungus).